Here is a 135-residue protein sequence, read N- to C-terminus: MLSPKRTRFRKQHRGRMKGVSSRGNHICFGRYALQALEPAWITSRQIEAGRRAMTRYARRGGKIWVRVFPDKPITVRPAETRMGSGKGSPEYWVSVIKPGRILHEMGGVPETVARAAMEIAACKMPIRTQFISAK.

A compositionally biased stretch (basic residues) spans M1–M17. The interval M1–S21 is disordered.

This sequence belongs to the universal ribosomal protein uL16 family. As to quaternary structure, part of the 50S ribosomal subunit.

The protein localises to the plastid. The protein resides in the chloroplast. The chain is Large ribosomal subunit protein uL16c from Amborella trichopoda.